The following is a 188-amino-acid chain: Shikimate kinase (188 aa).

ATP is bound at residue 21 to 26; the sequence is GAGKTT. Position 25 (Thr-25) interacts with Mg(2+). Substrate contacts are provided by Asp-43, Arg-67, and Gly-90. Arg-130 is a binding site for ATP. Substrate is bound at residue Arg-148.

It belongs to the shikimate kinase family. Monomer. Requires Mg(2+) as cofactor.

It is found in the cytoplasm. The enzyme catalyses shikimate + ATP = 3-phosphoshikimate + ADP + H(+). The protein operates within metabolic intermediate biosynthesis; chorismate biosynthesis; chorismate from D-erythrose 4-phosphate and phosphoenolpyruvate: step 5/7. Functionally, catalyzes the specific phosphorylation of the 3-hydroxyl group of shikimic acid using ATP as a cosubstrate. This chain is Shikimate kinase, found in Geobacillus kaustophilus (strain HTA426).